Reading from the N-terminus, the 382-residue chain is F-box/kelch-repeat protein KIB1 (382 aa).

Residues 22 to 69 form the F-box domain; sequence SKHSILAVDLVRLILERLSFVDFHRARCVSSIWYIASKTVIGVTNPTT. 3 Kelch repeats span residues 73–117, 159–209, and 259–306; these read ILFP…ASSG, VLWV…FKEN, and IVAK…ITVE.

Part of a SCF (SKP1-cullin-F-box) protein ligase complex. Binds directly to several GSK3 family proteins such as SKP1A/ASK1, ASK1/SK11, ASK3/SK12, ASK5/SK13, ASK7/BIN2/SK21, ASK9/SK22 and ASK6/SK23. Interacts with ASK7/BIN2/SK21 in a brassinosteroid (BR)-dependent manner. Expressed in seedlings, leaves, stems, flower buds and flowers.

The protein localises to the cytoplasm. It is found in the nucleus. The protein resides in the nucleolus. Its function is as follows. Component of SCF(ASK-cullin-F-box) E3 ubiquitin ligase complexes, which may mediate the ubiquitination and subsequent proteasomal degradation of target proteins. Required for brassinosteroid (BR) signal transduction. Mediates ASK7/BIN2/SK21 inactivation both by competing with substrate binding (e.g. BZR1) and by promoting its ubiquitination and subsequent proteasomal degradation. The polypeptide is F-box/kelch-repeat protein KIB1 (Arabidopsis thaliana (Mouse-ear cress)).